We begin with the raw amino-acid sequence, 2922 residues long: Small ribosomal subunit protein uS4c (2922 aa).

Residues 111 to 174 (MRLDNIVFRL…ISMELVSRFL (64 aa)) enclose the S4 RNA-binding domain.

This sequence belongs to the universal ribosomal protein uS4 family. Part of the 30S ribosomal subunit. Contacts protein S5. The interaction surface between S4 and S5 is involved in control of translational fidelity.

Its subcellular location is the plastid. The protein resides in the chloroplast. In terms of biological role, one of the primary rRNA binding proteins, it binds directly to 16S rRNA where it nucleates assembly of the body of the 30S subunit. Functionally, with S5 and S12 plays an important role in translational accuracy. The polypeptide is Small ribosomal subunit protein uS4c (rps4) (Stigeoclonium helveticum (Green alga)).